The following is a 26-amino-acid chain: M-lycotoxin-Ls2a (26 aa).

In terms of tissue distribution, expressed by the venom gland.

Its subcellular location is the secreted. It is found in the target cell membrane. Forms pore that permeabilize the cell membrane. Promotes efflux of calcium from synaptosomes, causes hemolysis, and dissipates voltage gradients across muscle membrane. Potently inhibits the growth of bacteria and yeast. May function both in the prey capture strategy as well as protection from infectious organisms arising from prey ingestion. The chain is M-lycotoxin-Ls2a from Lycosa singoriensis (Wolf spider).